The following is a 561-amino-acid chain: MSEEDIRAARLEKVEQLKQLGTNPYAYRWESTHHAAQLQEKFADLTSGEEVETEVAIAGRIMARRVFGKLAFFTLEDETGTIQLYLEKNRIQESMAEIDANAFNHLKQLTDVGDILGAKGTIKRTEKGELSVYVKEYTILTKSLLPLPDKWHGLTDVAKRYRQRYVDLIVNPEVRQTFRRRAQITAGIRRYLEQRDFLEIETPVLQSEAGGADARPFVTYHNTLEMELYLRIATELHLKRLIVGGFEKVFELGRIFRNEGISTRHNPEFTSIEVYQAYADYNDMMALTEGIITTVAQDVLGTLQITYQGETVDLTPPWRRVTMHDLVKEYTGLDFHSFQTLEEAKSAGKNAGIPGVDEAQTIGKILNLAFEEKVETKLIQPTFVIDYPVEISPLAKPHRSQPGLVERFELFIVGRETANSFSELTDPIDQRERLEAQAAKKAAGDLEAQGVDEDFLTALEYGMPPTGGLGIGIDRLVMLLTDSASIRDVIAFPLLKPEGSFIKAYRYEPTTQTLTLEFDSGSIYEYFKVPLTVKEELDNAPSKGQYFHKFIKGQFKYEQLS.

Residues glutamate 409 and glutamate 416 each contribute to the Mg(2+) site.

This sequence belongs to the class-II aminoacyl-tRNA synthetase family. In terms of assembly, homodimer. Mg(2+) is required as a cofactor.

Its subcellular location is the cytoplasm. The catalysed reaction is tRNA(Lys) + L-lysine + ATP = L-lysyl-tRNA(Lys) + AMP + diphosphate. In Nostoc sp. (strain PCC 7120 / SAG 25.82 / UTEX 2576), this protein is Lysine--tRNA ligase.